The primary structure comprises 331 residues: Vitamin B12 import system permease protein BtuC (331 aa).

A run of 9 helical transmembrane segments spans residues 20 to 42, 62 to 84, 91 to 113, 118 to 140, 147 to 169, 189 to 208, 240 to 262, 277 to 299, and 306 to 325; these read IMSV…FLSP, LVAA…VLLG, GVLG…LPVL, IFML…IARA, RLLL…AFYF, ASWY…VWLC, LAIS…VGLV, YLLP…GARL, and LPLG…WMLV.

Belongs to the binding-protein-dependent transport system permease family. FecCD subfamily. In terms of assembly, the complex is composed of two ATP-binding proteins (BtuD), two transmembrane proteins (BtuC) and a solute-binding protein (BtuF).

It is found in the cell inner membrane. Functionally, part of the ABC transporter complex BtuCDF involved in vitamin B12 import. Involved in the translocation of the substrate across the membrane. The protein is Vitamin B12 import system permease protein BtuC of Vibrio parahaemolyticus serotype O3:K6 (strain RIMD 2210633).